The following is a 267-amino-acid chain: Mannose-specific lectin 1 (267 aa).

An N-terminal signal peptide occupies residues 1-26 (MAKLLLFLLPAILGLLVPPRSWSAVA). Bulb-type lectin domains lie at 29-134 (TNYL…PSVP) and 148-255 (NNLL…PQAK). Beta-D-mannose is bound by residues 54–58 (QDDCN), Y62, W66, Q67, 173–177 (QGDCN), Y181, and 185–188 (YGWQ). Residues 54–62 (QDDCNLVLY) carry the Carbohydrate-binding motif 1 motif. 2 disulfide bridges follow: C57-C77 and C176-C198. Residues 173–181 (QGDCNLVLY) carry the Carbohydrate-binding motif 2 motif.

As to quaternary structure, forms heterotetramer of 2 chains 1 and 2 chains 2 arranged as a dimer of chain 1 and chain 2 heterodimers.

The protein localises to the secreted. Functionally, mannose-specific lectin. Shows agglutinating activity towards erythrocytes from rabbit. In Colocasia esculenta (Wild taro), this protein is Mannose-specific lectin 1.